The chain runs to 66 residues: Photosystem II reaction center protein H (66 aa).

Residues 27–47 traverse the membrane as a helical segment; that stretch reads GAVPIMTVIGLLLLVFLVILL.

This sequence belongs to the PsbH family. PSII is composed of 1 copy each of membrane proteins PsbA, PsbB, PsbC, PsbD, PsbE, PsbF, PsbH, PsbI, PsbJ, PsbK, PsbL, PsbM, PsbT, PsbX, PsbY, Psb30/Ycf12, peripheral proteins PsbO, CyanoQ (PsbQ), PsbU, PsbV and a large number of cofactors. It forms dimeric complexes.

The protein localises to the cellular thylakoid membrane. In terms of biological role, one of the components of the core complex of photosystem II (PSII), required for its stability and/or assembly. PSII is a light-driven water:plastoquinone oxidoreductase that uses light energy to abstract electrons from H(2)O, generating O(2) and a proton gradient subsequently used for ATP formation. It consists of a core antenna complex that captures photons, and an electron transfer chain that converts photonic excitation into a charge separation. This is Photosystem II reaction center protein H from Prochlorococcus marinus (strain MIT 9515).